The sequence spans 452 residues: Lamina-associated polypeptide 2, isoforms beta/delta/epsilon/gamma (452 aa).

The nucleoplasmic stretch occupies residues 1 to 409; it reads MPEFLEDPSV…KSEKTKKRRS (409 aa). Positions 5 to 48 constitute an LEM-like domain; that stretch reads LEDPSVLTKDKLKSELVANNVTLPAGEQRKDVYVQLYLQHLTAR. 2 disordered regions span residues 48–111 and 149–263; these read RNRP…DLDV and REQG…RVET. The linker stretch occupies residues 49 to 108; that stretch reads NRPPLAAGANSKGPPDFSSDEEREPTPVLGSGASVGRGRGAVGRKATKKTDKPRLEDKDD. A phosphoserine mark is found at serine 59, serine 66, and serine 67. Threonine 74 bears the Phosphothreonine mark. Phosphoserine is present on residues serine 79 and serine 82. Omega-N-methylarginine occurs at positions 85 and 87. Residues 96 to 105 are compositionally biased toward basic and acidic residues; the sequence is KKTDKPRLED. Residues 109–153 enclose the LEM domain; sequence LDVTELSNEELLDQLVRYGVNPGPIVGTTRKLYEKKLLKLREQGT. Residues 137–242 form an NAKAP95-binding N region; it reads TRKLYEKKLL…TSGSSTGGPL (106 aa). At threonine 153 the chain carries Phosphothreonine. The span at 154–177 shows a compositional bias: polar residues; that stretch reads ESRSSTPLPTVSSSAENTRQNGSN. Serine 155 and serine 158 each carry phosphoserine. 2 positions are modified to phosphothreonine: threonine 159 and threonine 163. A phosphoserine mark is found at serine 165, serine 167, and serine 176. The segment covering 178–202 has biased composition (basic and acidic residues); the sequence is DSDRYSDNDEDSKIELKLEKREPLK. Serine 179 carries the post-translational modification Phosphoserine; by PKC. Serine 183 and serine 189 each carry phosphoserine. Lysine 206 is subject to N6-acetyllysine. At threonine 210 the chain carries Phosphothreonine. A phosphoserine mark is found at serine 221 and serine 223. Residues 226 to 240 show a composition bias toward low complexity; that stretch reads GVTETEWTSGSSTGG. Serine 249, serine 253, serine 264, serine 291, serine 305, and serine 306 each carry phosphoserine. The interval 298 to 370 is binds lamins B; that stretch reads TGNFKHASSI…SCRRPIKGAA (73 aa). The tract at residues 299–373 is NAKAP95-binding C; the sequence is GNFKHASSIL…RPIKGAAGRP (75 aa). Phosphothreonine is present on threonine 311. Phosphoserine is present on serine 314. The residue at position 319 (arginine 319) is a Citrulline. Serine 361, serine 377, and serine 384 each carry phosphoserine. Lysine 388 is modified (N6-acetyllysine). A Glycyl lysine isopeptide (Lys-Gly) (interchain with G-Cter in SUMO2) cross-link involves residue lysine 400. Serine 401 is subject to Phosphoserine. Residues 410-430 form a helical; Signal-anchor for type II membrane protein membrane-spanning segment; it reads VPMWIKMLLFALVAVFLFLVY. At 431–452 the chain is on the lumenal side; it reads QAMETNQGNPFTNFLQDTKISN.

It belongs to the LEM family. As to quaternary structure, interacts with LMNB1, LMNB2, BANF1, AKAP8L, GMCL and chromosomes. In terms of processing, mitosis-specific phosphorylation specifically abolishes its binding to lamin B and chromosomes. Post-translationally, citrullinated by PADI4.

It is found in the nucleus inner membrane. The protein resides in the chromosome. Functionally, may help direct the assembly of the nuclear lamina and thereby help maintain the structural organization of the nuclear envelope. Possible receptor for attachment of lamin filaments to the inner nuclear membrane. May be involved in the control of initiation of DNA replication through its interaction with NAKAP95. The protein is Lamina-associated polypeptide 2, isoforms beta/delta/epsilon/gamma (Tmpo) of Mus musculus (Mouse).